The following is a 992-amino-acid chain: RNA-binding motif protein, X-linked-like-3 (992 aa).

Positions 8–86 (EKLFVGGLNL…KAIMVAQTIK (79 aa)) constitute an RRM domain. 7 disordered regions span residues 91–130 (SSRWVPPTPGSGSRSRFSHRTRGGGSSPQRPPSQGRPDDG), 144–169 (APMPRKRGPPPRHCASPPHKRRDPGD), 188–207 (PDYCPXRGDGNRNGYRGRDH), 278–385 (DHLP…DSSS), 397–511 (EEYQ…HRYR), 562–588 (SLDANSGGRSPNAYSGGHDSSSRSHRY), and 644–992 (NSGG…QSRY). Positions 284-296 (YSGGRSSSSNSYS) are enriched in low complexity. The span at 297–316 (RSDRYGEEGCYEEYRGRSPD) shows a compositional bias: basic and acidic residues. A compositionally biased stretch (low complexity) spans 318–334 (HSGGRNSSSNSYGQSHH). A compositionally biased stretch (basic and acidic residues) spans 335-371 (YGGEGRYEEYRGRYEEYRGRSHEARSGGRSTDAHSGG). Over residues 454–471 (THSGGRSSSSNSYGQSHR) the composition is skewed to low complexity. A compositionally biased stretch (basic and acidic residues) spans 472-488 (YGGEGHYEYRGRSHDAH). 3 stretches are compositionally biased toward polar residues: residues 564-574 (DANSGGRSPNA), 644-664 (NSGGCSPNAYSGGHDSSSQSH), and 752-774 (DANSGGRSPNAYSGGRDSSSNSY). Residues 785–798 (HYEEYRGRSHDTHS) are compositionally biased toward basic and acidic residues. A compositionally biased stretch (polar residues) spans 818–828 (GRNSFSNSYGQ). 3 stretches are compositionally biased toward basic and acidic residues: residues 831–842 (HYGRGGRYEEYQ), 920–948 (SGDHDRSSNSYGRSDRYSRGRDRVGRPDR), and 981–992 (GRFERGEGQSRY).

In Pan troglodytes (Chimpanzee), this protein is RNA-binding motif protein, X-linked-like-3 (RBMXL3).